A 443-amino-acid polypeptide reads, in one-letter code: Histidinol dehydrogenase (443 aa).

NAD(+) contacts are provided by Y133, Q191, and N214. Residues S240, Q262, and H265 each contribute to the substrate site. Residues Q262 and H265 each coordinate Zn(2+). Active-site proton acceptor residues include E329 and H330. Substrate is bound by residues H330, D363, E417, and H422. D363 lines the Zn(2+) pocket. H422 contacts Zn(2+).

Belongs to the histidinol dehydrogenase family. As to quaternary structure, homodimer. The cofactor is Zn(2+).

It catalyses the reaction L-histidinol + 2 NAD(+) + H2O = L-histidine + 2 NADH + 3 H(+). The protein operates within amino-acid biosynthesis; L-histidine biosynthesis; L-histidine from 5-phospho-alpha-D-ribose 1-diphosphate: step 9/9. Functionally, catalyzes the sequential NAD-dependent oxidations of L-histidinol to L-histidinaldehyde and then to L-histidine. This Yersinia pestis protein is Histidinol dehydrogenase.